The chain runs to 311 residues: tRNA-cytidine(32) 2-sulfurtransferase (311 aa).

Residues 47 to 52 (SGGKDS) carry the PP-loop motif motif. [4Fe-4S] cluster contacts are provided by Cys122, Cys125, and Cys213.

Belongs to the TtcA family. In terms of assembly, homodimer. Requires Mg(2+) as cofactor. [4Fe-4S] cluster is required as a cofactor.

Its subcellular location is the cytoplasm. The catalysed reaction is cytidine(32) in tRNA + S-sulfanyl-L-cysteinyl-[cysteine desulfurase] + AH2 + ATP = 2-thiocytidine(32) in tRNA + L-cysteinyl-[cysteine desulfurase] + A + AMP + diphosphate + H(+). It participates in tRNA modification. In terms of biological role, catalyzes the ATP-dependent 2-thiolation of cytidine in position 32 of tRNA, to form 2-thiocytidine (s(2)C32). The sulfur atoms are provided by the cysteine/cysteine desulfurase (IscS) system. The sequence is that of tRNA-cytidine(32) 2-sulfurtransferase from Salmonella paratyphi B (strain ATCC BAA-1250 / SPB7).